The primary structure comprises 276 residues: Tumor necrosis factor-inducible gene 6 protein (276 aa).

The N-terminal stretch at 1–17 is a signal peptide; sequence MIILIYLFVLVWEEAQG. Residues 36-129 form the Link domain; the sequence is GVYHREARSG…SERWDAYCYN (94 aa). 3 disulfide bridges follow: C58-C127, C82-C103, and C135-C161. An N-linked (GlcNAc...) asparagine glycan is attached at N118. A CUB domain is found at 135–247; it reads CGGVFTDPKR…GGFQIKYVTV (113 aa). The Ca(2+) site is built by E183, D191, D232, S234, and V235. C188 and C210 are joined by a disulfide. Residue N258 is glycosylated (N-linked (GlcNAc...) asparagine).

As to quaternary structure, interacts (via Link domain) with inter-alpha-inhibitor (I-alpha-I) component bikunin. Interacts with ITIH2/HC2; this interaction is required for transesterification of the HC to hyaluronan. Interacts (via Link and CUB domains) with ITIH1. Chondroitin sulfate may be required for the stability of the complex. Interacts (via Link domain) with various C-X-C and C-C chemokines including PF4, CXCL8, CXCL11, CXCL12, CCL2, CCL7, CCL19, CCL21, and CCL27; this interaction interferes with chemokine binding to glycosaminoglycans. Interacts (primarily via Link domain) with BMP2; this interaction is inhibited by hyaluronan. Interacts (via both Link and CUB domains) with TNFSF11. Interacts (via CUB domain) with FN1 (via type III repeats 9-14); this interaction enhances fibronectin fibril assembly. TNFAIP6 may act as a bridging molecule between FN1 and THBS1. In terms of tissue distribution, vascular smooth muscle cells.

The protein localises to the secreted. In terms of biological role, major regulator of extracellular matrix organization during tissue remodeling. Catalyzes the transfer of a heavy chain (HC) from inter-alpha-inhibitor (I-alpha-I) complex to hyaluronan. Cleaves the ester bond between the C-terminus of the HC and GalNAc residue of the chondroitin sulfate chain in I-alpha-I complex followed by transesterification of the HC to hyaluronan. In the process, potentiates the antiprotease function of I-alpha-I complex through release of free bikunin. Acts as a catalyst in the formation of hyaluronan-HC oligomers and hyaluronan-rich matrix surrounding the cumulus cell-oocyte complex, a necessary step for oocyte fertilization. Assembles hyaluronan in pericellular matrices that serve as platforms for receptor clustering and signaling. Enables binding of hyaluronan deposited on the surface of macrophages to LYVE1 on lymphatic endothelium and facilitates macrophage extravasation. Alters hyaluronan binding to functionally latent CD44 on vascular endothelium, switching CD44 into an active state that supports leukocyte rolling. Modulates the interaction of chemokines with extracellular matrix components and proteoglycans on endothelial cell surface, likely preventing chemokine gradient formation. In a negative feedback mechanism, may limit excessive neutrophil recruitment at inflammatory sites by antagonizing the association of CXCL8 with glycosaminoglycans on vascular endothelium. Has a role in osteogenesis and bone remodeling. Inhibits BMP2-dependent differentiation of mesenchymal stem cell to osteoblasts. Protects against bone erosion during inflammation by inhibiting TNFSF11/RANKL-dependent osteoclast activation. This Oryctolagus cuniculus (Rabbit) protein is Tumor necrosis factor-inducible gene 6 protein (TNFAIP6).